A 232-amino-acid polypeptide reads, in one-letter code: Purine nucleoside phosphorylase DeoD-type (232 aa).

Residue histidine 4 participates in a purine D-ribonucleoside binding. Residues glycine 20, arginine 24, arginine 43, and 87–90 (RIGT) contribute to the phosphate site. Residues 179–181 (EME) and 203–204 (SD) each bind a purine D-ribonucleoside. Catalysis depends on aspartate 204, which acts as the Proton donor.

It belongs to the PNP/UDP phosphorylase family. Homohexamer; trimer of homodimers.

The enzyme catalyses a purine D-ribonucleoside + phosphate = a purine nucleobase + alpha-D-ribose 1-phosphate. It carries out the reaction a purine 2'-deoxy-D-ribonucleoside + phosphate = a purine nucleobase + 2-deoxy-alpha-D-ribose 1-phosphate. Catalyzes the reversible phosphorolytic breakdown of the N-glycosidic bond in the beta-(deoxy)ribonucleoside molecules, with the formation of the corresponding free purine bases and pentose-1-phosphate. The chain is Purine nucleoside phosphorylase DeoD-type from Caldanaerobacter subterraneus subsp. tengcongensis (strain DSM 15242 / JCM 11007 / NBRC 100824 / MB4) (Thermoanaerobacter tengcongensis).